A 344-amino-acid chain; its full sequence is tRNA(Ile)-lysidine synthase (344 aa).

35–40 (SGGPDS) lines the ATP pocket.

It belongs to the tRNA(Ile)-lysidine synthase family.

It is found in the cytoplasm. It catalyses the reaction cytidine(34) in tRNA(Ile2) + L-lysine + ATP = lysidine(34) in tRNA(Ile2) + AMP + diphosphate + H(+). Ligates lysine onto the cytidine present at position 34 of the AUA codon-specific tRNA(Ile) that contains the anticodon CAU, in an ATP-dependent manner. Cytidine is converted to lysidine, thus changing the amino acid specificity of the tRNA from methionine to isoleucine. This Methylobacterium sp. (strain 4-46) protein is tRNA(Ile)-lysidine synthase.